The sequence spans 668 residues: tRNA 5-methylaminomethyl-2-thiouridine biosynthesis bifunctional protein MnmC (668 aa).

The segment at 1 to 245 is tRNA (mnm(5)s(2)U34)-methyltransferase; the sequence is MKHYSIQPAN…KREMLCGVME (245 aa). Residues 270 to 668 form an FAD-dependent cmnm(5)s(2)U34 oxidoreductase region; that stretch reads IGGGIASALL…LLKGKAVKAG (399 aa).

This sequence in the N-terminal section; belongs to the methyltransferase superfamily. tRNA (mnm(5)s(2)U34)-methyltransferase family. In the C-terminal section; belongs to the DAO family. Requires FAD as cofactor.

Its subcellular location is the cytoplasm. The catalysed reaction is 5-aminomethyl-2-thiouridine(34) in tRNA + S-adenosyl-L-methionine = 5-methylaminomethyl-2-thiouridine(34) in tRNA + S-adenosyl-L-homocysteine + H(+). Its function is as follows. Catalyzes the last two steps in the biosynthesis of 5-methylaminomethyl-2-thiouridine (mnm(5)s(2)U) at the wobble position (U34) in tRNA. Catalyzes the FAD-dependent demodification of cmnm(5)s(2)U34 to nm(5)s(2)U34, followed by the transfer of a methyl group from S-adenosyl-L-methionine to nm(5)s(2)U34, to form mnm(5)s(2)U34. The sequence is that of tRNA 5-methylaminomethyl-2-thiouridine biosynthesis bifunctional protein MnmC from Escherichia coli (strain K12 / DH10B).